We begin with the raw amino-acid sequence, 363 residues long: Ribosomal RNA large subunit methyltransferase M (363 aa).

S-adenosyl-L-methionine is bound by residues Ser190, 223–226, Asp242, Asp262, and Asp279; that span reads CPGG. Lys308 serves as the catalytic Proton acceptor.

The protein belongs to the class I-like SAM-binding methyltransferase superfamily. RNA methyltransferase RlmE family. RlmM subfamily. Monomer.

Its subcellular location is the cytoplasm. It carries out the reaction cytidine(2498) in 23S rRNA + S-adenosyl-L-methionine = 2'-O-methylcytidine(2498) in 23S rRNA + S-adenosyl-L-homocysteine + H(+). In terms of biological role, catalyzes the 2'-O-methylation at nucleotide C2498 in 23S rRNA. The sequence is that of Ribosomal RNA large subunit methyltransferase M from Vibrio atlanticus (strain LGP32) (Vibrio splendidus (strain Mel32)).